Here is a 159-residue protein sequence, read N- to C-terminus: Phosphopantetheine adenylyltransferase (159 aa).

Thr-10 contributes to the substrate binding site. Residues 10 to 11 (TF) and His-18 contribute to the ATP site. Substrate contacts are provided by Lys-42, Met-74, and Arg-88. Residues 89-91 (GLR), Glu-99, and 124-130 (WSFISSS) each bind ATP.

The protein belongs to the bacterial CoaD family. As to quaternary structure, homohexamer. The cofactor is Mg(2+).

It is found in the cytoplasm. The enzyme catalyses (R)-4'-phosphopantetheine + ATP + H(+) = 3'-dephospho-CoA + diphosphate. Its pathway is cofactor biosynthesis; coenzyme A biosynthesis; CoA from (R)-pantothenate: step 4/5. Reversibly transfers an adenylyl group from ATP to 4'-phosphopantetheine, yielding dephospho-CoA (dPCoA) and pyrophosphate. The protein is Phosphopantetheine adenylyltransferase of Salmonella dublin (strain CT_02021853).